Here is a 213-residue protein sequence, read N- to C-terminus: CDP-diacylglycerol--inositol 3-phosphatidyltransferase (213 aa).

Over 1–5 (MPDEN) the chain is Cytoplasmic. Residues 6–26 (IFLFVPNLIGYARIVFAIISF) form a helical membrane-spanning segment. Tyrosine 27 is a topological domain (lumenal). A helical membrane pass occupies residues 28-48 (FMPCCPLTASSFYLLSGLLDA). Mg(2+) is bound by residues aspartate 47 and aspartate 50. Residues 49-73 (FDGHAARALNQGTRFGAMLDMLTDR) are Cytoplasmic-facing. Residues glycine 51, arginine 55, and threonine 61 each coordinate a CDP-1,2-diacyl-sn-glycerol. Mg(2+) contacts are provided by aspartate 68 and aspartate 72. The active-site Proton acceptor is aspartate 72. The chain crosses the membrane as a helical span at residues 74-94 (CSTMCLLVNLALLYPGATLFF). Position 95 (glutamine 95) is a topological domain, lumenal. A helical membrane pass occupies residues 96–116 (ISMSLDVASHWLHLHSSVVRG). Topologically, residues 117 to 139 (SESHKMIDLSGNPVLRIYYTSRP) are cytoplasmic. A helical transmembrane segment spans residues 140–160 (ALFTLCAGNELFYCLLYLFHF). The Lumenal segment spans residues 161 to 174 (SEGPLVGSVGLFRM). A helical transmembrane segment spans residues 175–195 (GLWVTAPIALLKSLISVIHLI). Residues 196–213 (TAARNMAALDAADRAKKK) lie on the Cytoplasmic side of the membrane.

The protein belongs to the CDP-alcohol phosphatidyltransferase class-I family. Mn(2+) is required as a cofactor. Mg(2+) serves as cofactor. In terms of tissue distribution, detected in placenta (at protein level). Widely expressed. Higher expression in adult liver and skeletal muscle, slightly lower levels seen in pancreas, kidney, lung, placenta, brain, heart, leukocyte, colon, small intestine, ovary, testis, prostate, thymus and spleen. In fetus, expressed in kidney, liver, lung and brain.

Its subcellular location is the endoplasmic reticulum membrane. The protein resides in the cell membrane. The enzyme catalyses a CDP-1,2-diacyl-sn-glycerol + myo-inositol = a 1,2-diacyl-sn-glycero-3-phospho-(1D-myo-inositol) + CMP + H(+). Its activity is regulated as follows. Inhibited by PtdIns (product inhibition), phosphatidylinositol phosphate, and nucleoside di- and tri-phosphates. Its function is as follows. Catalyzes the biosynthesis of phosphatidylinositol (PtdIns) as well as PtdIns:inositol exchange reaction. May thus act to reduce an excessive cellular PtdIns content. The exchange activity is due to the reverse reaction of PtdIns synthase and is dependent on CMP, which is tightly bound to the enzyme. The sequence is that of CDP-diacylglycerol--inositol 3-phosphatidyltransferase from Homo sapiens (Human).